The sequence spans 75 residues: Porwaprin-b (75 aa).

The N-terminal stretch at 1 to 24 is a signal peptide; that stretch reads MSSGGLLLLLGLLTLWAELTPVSG. The WAP domain maps to 27–72; sequence RPVKPGLCPPRPQKPPCVKECKNDWSCRGEQKCCHYGCIYECRDPI. Disulfide bonds link C34–C60, C43–C64, C47–C59, and C53–C68.

This sequence belongs to the venom waprin family. In terms of tissue distribution, expressed by the venom gland.

The protein resides in the secreted. Its function is as follows. Damages membranes of susceptible bacteria. Has no hemolytic activity. Not toxic to mice. Does not inhibit the proteinases elastase and cathepsin G. The protein is Porwaprin-b of Pseudechis porphyriacus (Red-bellied black snake).